Here is an 85-residue protein sequence, read N- to C-terminus: Beta-insect depressant toxin Lqh-dprIT3f (85 aa).

The signal sequence occupies residues 1-21; the sequence is MKLLLLLTISASMLIEGLVNA. The LCN-type CS-alpha/beta domain occupies 22-82; that stretch reads DGYIRGGDGC…EWDYETDTCG (61 aa). 4 cysteine pairs are disulfide-bonded: Cys31–Cys81, Cys35–Cys56, Cys42–Cys63, and Cys46–Cys65. Gly82 carries the glycine amide modification.

This sequence belongs to the long (4 C-C) scorpion toxin superfamily. Sodium channel inhibitor family. Beta subfamily. In terms of tissue distribution, expressed by the venom gland.

It localises to the secreted. Depressant insect beta-toxins cause a transient contraction paralysis followed by a slow flaccid paralysis. They bind voltage-independently at site-4 of sodium channels (Nav) and block action potentials, primarily by depolarizing the axonal membrane and suppressing the sodium current. This depressant toxin is active only on insects. It is found in a relatively small amount in the venom. This chain is Beta-insect depressant toxin Lqh-dprIT3f, found in Leiurus hebraeus (Hebrew deathstalker scorpion).